A 201-amino-acid polypeptide reads, in one-letter code: tRNA (guanine-N(7)-)-methyltransferase (201 aa).

S-adenosyl-L-methionine is bound by residues Glu34, Glu59, Asp86, and Asp107. Asp107 is an active-site residue. Substrate contacts are provided by residues Lys111, Asp143, and 181 to 184; that span reads TDYE.

It belongs to the class I-like SAM-binding methyltransferase superfamily. TrmB family.

The catalysed reaction is guanosine(46) in tRNA + S-adenosyl-L-methionine = N(7)-methylguanosine(46) in tRNA + S-adenosyl-L-homocysteine. Its pathway is tRNA modification; N(7)-methylguanine-tRNA biosynthesis. Catalyzes the formation of N(7)-methylguanine at position 46 (m7G46) in tRNA. The sequence is that of tRNA (guanine-N(7)-)-methyltransferase from Mycoplasma mobile (strain ATCC 43663 / 163K / NCTC 11711) (Mesomycoplasma mobile).